The primary structure comprises 362 residues: Lipoprotein p35 (362 aa).

A signal peptide spans 1–30; the sequence is MKIKKIKLLKALALTGAFGIVATVPVIVSS. Cys-31 carries N-palmitoyl cysteine lipidation. Cys-31 carries the S-diacylglycerol cysteine lipid modification. A disordered region spans residues 33–53; it reads STSENNGNGNGNGGTDGNTQQ.

This sequence belongs to the p35 lipoprotein family. Post-translationally, the N-terminus is blocked.

Its subcellular location is the cell membrane. In terms of biological role, major M.penetrans antigen. The polypeptide is Lipoprotein p35 (Malacoplasma penetrans (Mycoplasma penetrans)).